The sequence spans 165 residues: Fimbrial protein (165 aa).

Positions 1–21 (MRKSASAVAVLALIACGSAHA) are cleaved as a signal peptide.

The protein resides in the fimbrium. Its function is as follows. Structural subunit of the sef14 fimbriae. The polypeptide is Fimbrial protein (sefA) (Salmonella enteritidis).